A 224-amino-acid polypeptide reads, in one-letter code: Dickkopf-related protein 4 (224 aa).

The first 18 residues, 1–18, serve as a signal peptide directing secretion; that stretch reads MVAAVLLGLSWLCSPLGA. The DKK-type Cys-1 stretch occupies residues 41-90; it reads CLSDTDCNTRKFCLQPRDEKPFCATCRGLRRRCQRDAMCCPGTLCVNDVC. A disordered region spans residues 109 to 139; sequence GTHAEGTTGHPVQENQPKRKPSIKKSQGRKG. Over residues 126–136 the composition is skewed to basic residues; that stretch reads KRKPSIKKSQG. Intrachain disulfides connect cysteine 145–cysteine 157, cysteine 151–cysteine 166, cysteine 156–cysteine 194, cysteine 176–cysteine 202, and cysteine 196–cysteine 218. Residues 145–218 form a DKK-type Cys-2 region; sequence CLRTFDCGPG…NRQHARLRVC (74 aa).

Belongs to the dickkopf family. As to quaternary structure, interacts with LRP5 and LRP6. Post-translationally, appears to be not glycosylated. In terms of processing, can be proteolytically processed by a furin-like protease. As to expression, expressed in cerebellum, T-cells, esophagus and lung.

Its subcellular location is the secreted. Its function is as follows. Antagonizes canonical Wnt signaling by inhibiting LRP5/6 interaction with Wnt and by forming a ternary complex with the transmembrane protein KREMEN that promotes internalization of LRP5/6. DKKs play an important role in vertebrate development, where they locally inhibit Wnt regulated processes such as antero-posterior axial patterning, limb development, somitogenesis and eye formation. In the adult, Dkks are implicated in bone formation and bone disease, cancer and Alzheimer disease. In Homo sapiens (Human), this protein is Dickkopf-related protein 4 (DKK4).